The chain runs to 489 residues: 3-octaprenyl-4-hydroxybenzoate carboxy-lyase (489 aa).

Asn-172 is a Mn(2+) binding site. Prenylated FMN is bound by residues 175–177 (IYR), 189–191 (RWL), and 194–195 (RG). Glu-238 contributes to the Mn(2+) binding site. Asp-287 functions as the Proton donor in the catalytic mechanism.

Belongs to the UbiD family. As to quaternary structure, homohexamer. Prenylated FMN serves as cofactor. The cofactor is Mn(2+).

Its subcellular location is the cell membrane. It catalyses the reaction a 4-hydroxy-3-(all-trans-polyprenyl)benzoate + H(+) = a 2-(all-trans-polyprenyl)phenol + CO2. It functions in the pathway cofactor biosynthesis; ubiquinone biosynthesis. Its function is as follows. Catalyzes the decarboxylation of 3-octaprenyl-4-hydroxy benzoate to 2-octaprenylphenol, an intermediate step in ubiquinone biosynthesis. This Salmonella arizonae (strain ATCC BAA-731 / CDC346-86 / RSK2980) protein is 3-octaprenyl-4-hydroxybenzoate carboxy-lyase.